Reading from the N-terminus, the 272-residue chain is 2-dehydro-3-deoxyphosphooctonate aldolase (272 aa).

This sequence belongs to the KdsA family.

It is found in the cytoplasm. The enzyme catalyses D-arabinose 5-phosphate + phosphoenolpyruvate + H2O = 3-deoxy-alpha-D-manno-2-octulosonate-8-phosphate + phosphate. It functions in the pathway carbohydrate biosynthesis; 3-deoxy-D-manno-octulosonate biosynthesis; 3-deoxy-D-manno-octulosonate from D-ribulose 5-phosphate: step 2/3. It participates in bacterial outer membrane biogenesis; lipopolysaccharide biosynthesis. The protein is 2-dehydro-3-deoxyphosphooctonate aldolase of Geobacter metallireducens (strain ATCC 53774 / DSM 7210 / GS-15).